Consider the following 124-residue polypeptide: Fluoride-specific ion channel FluC 2 (124 aa).

A run of 4 helical transmembrane segments spans residues 1–21, 36–58, 63–85, and 104–124; these read MNFLLAGIGASIGAMLRYAIT, SNLPTPTLFINLTGAFILGFIFG, VFIYAIVGTGVLGGYTTFSTMNT, and LSSYLGGLILVFVGYYLAILF. Positions 75 and 78 each coordinate Na(+).

This sequence belongs to the fluoride channel Fluc/FEX (TC 1.A.43) family. In terms of assembly, heterodimer composed of FluC1 and FluC2. Neither FluC1 nor FluC2 alone catalyzes fluoride efflux from liposomes.

It is found in the cell membrane. The catalysed reaction is fluoride(in) = fluoride(out). Its activity is regulated as follows. Na(+) is not transported, but it plays an essential structural role and its presence is essential for fluoride channel function. Its function is as follows. Fluoride-specific ion channel. Important for reducing fluoride concentration in the cell, thus reducing its toxicity. The sequence is that of Fluoride-specific ion channel FluC 2 from Lactobacillus acidophilus (strain ATCC 700396 / NCK56 / N2 / NCFM).